The sequence spans 457 residues: uncharacterized protein (457 aa).

A run of 2 helical transmembrane segments spans residues 1-21 and 250-270; these read MVSS…MTLL and ILIV…ATTF.

It localises to the membrane. This is an uncharacterized protein from Saccharomyces cerevisiae (strain ATCC 204508 / S288c) (Baker's yeast).